The sequence spans 306 residues: Dermonecrotic toxin LarSicTox-alphaIB1ai (306 aa).

A signal peptide is located at residue Val1. Positions 2–27 (RATEKFASMYFFCHSPQSAETDVAER) are excised as a propeptide. The active site involves His38. The Mg(2+) site is built by Glu58 and Asp60. His74 functions as the Nucleophile in the catalytic mechanism. 2 disulfide bridges follow: Cys78/Cys84 and Cys80/Cys223. Residue Asp118 participates in Mg(2+) binding. Asn283 carries an N-linked (GlcNAc...) asparagine glycan.

The protein belongs to the arthropod phospholipase D family. Class II subfamily. The cofactor is Mg(2+). In terms of tissue distribution, expressed by the venom gland.

Its subcellular location is the secreted. It carries out the reaction an N-(acyl)-sphingosylphosphocholine = an N-(acyl)-sphingosyl-1,3-cyclic phosphate + choline. It catalyses the reaction an N-(acyl)-sphingosylphosphoethanolamine = an N-(acyl)-sphingosyl-1,3-cyclic phosphate + ethanolamine. The enzyme catalyses a 1-acyl-sn-glycero-3-phosphocholine = a 1-acyl-sn-glycero-2,3-cyclic phosphate + choline. The catalysed reaction is a 1-acyl-sn-glycero-3-phosphoethanolamine = a 1-acyl-sn-glycero-2,3-cyclic phosphate + ethanolamine. In terms of biological role, dermonecrotic toxins cleave the phosphodiester linkage between the phosphate and headgroup of certain phospholipids (sphingolipid and lysolipid substrates), forming an alcohol (often choline) and a cyclic phosphate. This toxin acts on sphingomyelin (SM). It may also act on ceramide phosphoethanolamine (CPE), lysophosphatidylcholine (LPC) and lysophosphatidylethanolamine (LPE), but not on lysophosphatidylserine (LPS), and lysophosphatidylglycerol (LPG). It acts by transphosphatidylation, releasing exclusively cyclic phosphate products as second products. Induces dermonecrosis, hemolysis, increased vascular permeability, edema, inflammatory response, and platelet aggregation. The sequence is that of Dermonecrotic toxin LarSicTox-alphaIB1ai from Loxosceles arizonica (Arizona brown spider).